The primary structure comprises 122 residues: Small ribosomal subunit protein uS13 (122 aa).

Positions 94–122 (KQLPVRGQRTHTNARTRKGKAKPIAGKKK) are disordered.

Belongs to the universal ribosomal protein uS13 family. As to quaternary structure, part of the 30S ribosomal subunit. Forms a loose heterodimer with protein S19. Forms two bridges to the 50S subunit in the 70S ribosome.

Its function is as follows. Located at the top of the head of the 30S subunit, it contacts several helices of the 16S rRNA. In the 70S ribosome it contacts the 23S rRNA (bridge B1a) and protein L5 of the 50S subunit (bridge B1b), connecting the 2 subunits; these bridges are implicated in subunit movement. Contacts the tRNAs in the A and P-sites. In Methylorubrum populi (strain ATCC BAA-705 / NCIMB 13946 / BJ001) (Methylobacterium populi), this protein is Small ribosomal subunit protein uS13.